We begin with the raw amino-acid sequence, 298 residues long: uncharacterized protein (298 aa).

10 helical membrane-spanning segments follow: residues 9–28 (GYVLGLTAYVIWGLFPLYFK), 38–60 (IIVQRAVWSALFGAVLLLFWKHP), 72–94 (RFVVLAASGLLIASNWMTYVWAV), 104–121 (LGYYINPLINVMLGMLLL), 128–145 (LQWLAVALASLGVAQQVW), 150–167 (LPWVSLVLALTFGFYGLI), 174–196 (AALPGLVVETWLLLPLALVWLLF), 211–233 (PEALWVVAAGPVTLVPLVCFNAA), 240–262 (ATLGFLQYLAPTLVLLQAILLFG), and 272–291 (AFAFIWLALAVYSFDAWRSL). An EamA domain is found at 18 to 141 (VIWGLFPLYF…AVALASLGVA (124 aa)).

This sequence belongs to the EamA transporter family.

The protein resides in the cell membrane. This is an uncharacterized protein from Pseudomonas aeruginosa (strain ATCC 15692 / DSM 22644 / CIP 104116 / JCM 14847 / LMG 12228 / 1C / PRS 101 / PAO1).